We begin with the raw amino-acid sequence, 234 residues long: Demethylmenaquinone methyltransferase (234 aa).

S-adenosyl-L-methionine is bound by residues Thr58, Asp79, and 106–107 (NA).

It belongs to the class I-like SAM-binding methyltransferase superfamily. MenG/UbiE family.

The enzyme catalyses a 2-demethylmenaquinol + S-adenosyl-L-methionine = a menaquinol + S-adenosyl-L-homocysteine + H(+). It functions in the pathway quinol/quinone metabolism; menaquinone biosynthesis; menaquinol from 1,4-dihydroxy-2-naphthoate: step 2/2. Methyltransferase required for the conversion of demethylmenaquinol (DMKH2) to menaquinol (MKH2). The chain is Demethylmenaquinone methyltransferase from Geobacillus sp. (strain WCH70).